The following is a 37-amino-acid chain: Large ribosomal subunit protein bL36 (37 aa).

The protein belongs to the bacterial ribosomal protein bL36 family.

The sequence is that of Large ribosomal subunit protein bL36 from Rippkaea orientalis (strain PCC 8801 / RF-1) (Cyanothece sp. (strain PCC 8801)).